Consider the following 182-residue polypeptide: Translation initiation factor IF-3, chloroplastic (182 aa).

It belongs to the IF-3 family. As to quaternary structure, monomer.

It is found in the plastid. The protein localises to the chloroplast. Functionally, IF-3 binds to the 30S ribosomal subunit and shifts the equilibrium between 70S ribosomes and their 50S and 30S subunits in favor of the free subunits, thus enhancing the availability of 30S subunits on which protein synthesis initiation begins. This chain is Translation initiation factor IF-3, chloroplastic, found in Porphyra purpurea (Red seaweed).